The primary structure comprises 97 residues: Aspartyl/glutamyl-tRNA(Asn/Gln) amidotransferase subunit C (97 aa).

It belongs to the GatC family. As to quaternary structure, heterotrimer of A, B and C subunits.

The catalysed reaction is L-glutamyl-tRNA(Gln) + L-glutamine + ATP + H2O = L-glutaminyl-tRNA(Gln) + L-glutamate + ADP + phosphate + H(+). It catalyses the reaction L-aspartyl-tRNA(Asn) + L-glutamine + ATP + H2O = L-asparaginyl-tRNA(Asn) + L-glutamate + ADP + phosphate + 2 H(+). Allows the formation of correctly charged Asn-tRNA(Asn) or Gln-tRNA(Gln) through the transamidation of misacylated Asp-tRNA(Asn) or Glu-tRNA(Gln) in organisms which lack either or both of asparaginyl-tRNA or glutaminyl-tRNA synthetases. The reaction takes place in the presence of glutamine and ATP through an activated phospho-Asp-tRNA(Asn) or phospho-Glu-tRNA(Gln). This is Aspartyl/glutamyl-tRNA(Asn/Gln) amidotransferase subunit C from Picosynechococcus sp. (strain ATCC 27264 / PCC 7002 / PR-6) (Agmenellum quadruplicatum).